We begin with the raw amino-acid sequence, 478 residues long: tRNA modification GTPase MnmE (478 aa).

3 residues coordinate (6S)-5-formyl-5,6,7,8-tetrahydrofolate: arginine 36, glutamate 94, and lysine 133. In terms of domain architecture, TrmE-type G spans glycine 230 to glycine 402. Residue asparagine 240 coordinates K(+). GTP-binding positions include asparagine 240–serine 245, threonine 259–threonine 265, and aspartate 284–glycine 287. Residue serine 244 coordinates Mg(2+). Threonine 259, valine 261, and threonine 264 together coordinate K(+). Threonine 265 is a Mg(2+) binding site. Lysine 478 is a binding site for (6S)-5-formyl-5,6,7,8-tetrahydrofolate.

The protein belongs to the TRAFAC class TrmE-Era-EngA-EngB-Septin-like GTPase superfamily. TrmE GTPase family. In terms of assembly, homodimer. Heterotetramer of two MnmE and two MnmG subunits. K(+) is required as a cofactor.

It is found in the cytoplasm. Exhibits a very high intrinsic GTPase hydrolysis rate. Involved in the addition of a carboxymethylaminomethyl (cmnm) group at the wobble position (U34) of certain tRNAs, forming tRNA-cmnm(5)s(2)U34. The polypeptide is tRNA modification GTPase MnmE (Psychrobacter cryohalolentis (strain ATCC BAA-1226 / DSM 17306 / VKM B-2378 / K5)).